We begin with the raw amino-acid sequence, 131 residues long: Large ribosomal subunit protein bL12 (131 aa).

This sequence belongs to the bacterial ribosomal protein bL12 family. As to quaternary structure, homodimer. Part of the ribosomal stalk of the 50S ribosomal subunit. Forms a multimeric L10(L12)X complex, where L10 forms an elongated spine to which 2 to 4 L12 dimers bind in a sequential fashion. Binds GTP-bound translation factors.

Its function is as follows. Forms part of the ribosomal stalk which helps the ribosome interact with GTP-bound translation factors. Is thus essential for accurate translation. The sequence is that of Large ribosomal subunit protein bL12 from Prochlorococcus marinus (strain MIT 9301).